The chain runs to 618 residues: Cationic amino acid transporter 3 (618 aa).

Over 1–36 the chain is Cytoplasmic; it reads MLWQALRRFGQKLVRRRVLELGMGETRLARCLSTLD. A helical membrane pass occupies residues 37–57; sequence LVALGVGSTLGAGVYVLAGEV. The Extracellular portion of the chain corresponds to 58–61; sequence AKDK. A helical transmembrane segment spans residues 62–82; that stretch reads AGPSIVICFLVAALSSVLAGL. The Cytoplasmic segment spans residues 83–107; it reads CYAEFGARVPGSGSAYLYSYVTVGE. The helical transmembrane segment at 108-128 threads the bilayer; that stretch reads LWAFTTGWNLILSYVIGTASV. The Extracellular portion of the chain corresponds to 129–162; the sequence is ARAWSSAFDNLIGNHISRTLKGTILLKMPHVLAE. A helical transmembrane segment spans residues 163–183; the sequence is YPDFFALALVLLLTGLLVLGA. Residues 184–191 lie on the Cytoplasmic side of the membrane; it reads SKSALVTK. The chain crosses the membrane as a helical span at residues 192–212; sequence VFTGMNLLVLSFVIISGFIKG. At 213–244 the chain is on the extracellular side; that stretch reads ELRNWKLTKEDYCLTMSESNGTCSLDSMGSGG. Asn-232 is a glycosylation site (N-linked (GlcNAc...) asparagine). The helical transmembrane segment at 245-265 threads the bilayer; sequence FMPFGLEGILRGAATCFYAFV. The Cytoplasmic portion of the chain corresponds to 266–285; the sequence is GFDCIATTGEEAQNPQRSIP. Residues 286-306 traverse the membrane as a helical segment; that stretch reads MGIVISMFICFLAYFGVSSAL. Topologically, residues 307-335 are extracellular; sequence TLMMPYYKLHPESPLPEAFSYVGWEPARY. The chain crosses the membrane as a helical span at residues 336 to 356; it reads LVAIGSLCALSTSLLGSMFPM. Residues 357–380 lie on the Cytoplasmic side of the membrane; the sequence is PRVMYSMAEDGLLFRVLAKVHSVT. A helical membrane pass occupies residues 381–401; it reads HIPIVATLVSGVIAAFMAFLF. The Extracellular portion of the chain corresponds to 402 to 406; that stretch reads ELTDL. The helical transmembrane segment at 407–427 threads the bilayer; sequence VDLMSIGTLLAHSLVSICVLI. Residues 428 to 474 lie on the Cytoplasmic side of the membrane; it reads LRYQPDQEMKSVEEEMELQEETLEAEKLTVQALFCPVNSIPTLLSGR. The chain crosses the membrane as a helical span at residues 475–495; sequence VVYVCSSLLAVLLTVLCLVLT. At 496 to 506 the chain is on the extracellular side; it reads WWTTPLRSGDP. Residues 507-527 form a helical membrane-spanning segment; that stretch reads VWVTVVVLILGLILAISGVIW. Topologically, residues 528–539 are cytoplasmic; it reads RQPQNRTPLHFK. The helical transmembrane segment at 540-560 threads the bilayer; it reads VPAVPLLPLVSIFVNVYLMMQ. The Extracellular portion of the chain corresponds to 561–568; the sequence is MTAGTWAR. Residues 569 to 589 traverse the membrane as a helical segment; that stretch reads FGIWMLIGFAIYFGYGIQHSM. Residues 590–618 are Cytoplasmic-facing; it reads KEVKNHQTLPKTRAQTIDLDLTTSCVHSI. Thr-605 is modified (phosphothreonine). Ser-617 is subject to Phosphoserine.

The protein belongs to the amino acid-polyamine-organocation (APC) superfamily. Cationic amino acid transporter (CAT) (TC 2.A.3.3) family. Post-translationally, N-glycosylated. As to expression, expressed in adult brain and in a wide variety of embryonic tissues.

It is found in the cell membrane. It catalyses the reaction L-arginine(in) = L-arginine(out). The catalysed reaction is L-lysine(in) = L-lysine(out). It carries out the reaction L-ornithine(in) = L-ornithine(out). Its function is as follows. Uniporter that mediates the uptake of cationic L-amino acids such as L-arginine, L-lysine and L-ornithine. The transport is sodium ions- and pH-independent, moderately trans-stimulated and is mediated by passive diffusion. This chain is Cationic amino acid transporter 3, found in Mus musculus (Mouse).